Here is a 258-residue protein sequence, read N- to C-terminus: MNIPFPFSFPPAICLLLIPGVFPVSCEGIIGGNEVAPHTRRYMALIKGLKLCAGALIKENWVLTAAHCDLKGNPQVILGAHSTSHKEKLDQVFSIKKAIPYPCFDPQTFEGDLQLLQLEGKATMTKAVGILQLPRTEDDVKPHTKCHVAGWGSTKKDACQMSNALREANVTVIDRKICNDAQHYNFNPVIDLSMICAGGRKGEDDSCEGDSGSPLICDNVFRGVTSFGKCGNPQKPGIYILLTKKHLNWIKKTIAGAI.

The first 26 residues, 1–26, serve as a signal peptide directing secretion; that stretch reads MNIPFPFSFPPAICLLLIPGVFPVSC. A propeptide spans 27 to 28 (activation peptide); the sequence is EG. The 227-residue stretch at 29–255 folds into the Peptidase S1 domain; that stretch reads IIGGNEVAPH…HLNWIKKTIA (227 aa). A disulfide bond links Cys52 and Cys68. Active-site charge relay system residues include His67 and Asp112. 3 disulfide bridges follow: Cys146–Cys217, Cys178–Cys196, and Cys207–Cys230. The N-linked (GlcNAc...) asparagine glycan is linked to Asn169. Ser211 serves as the catalytic Charge relay system.

It belongs to the peptidase S1 family. Granzyme subfamily. Homodimer; disulfide-linked. Interacts with APEX1.

It localises to the secreted. The protein localises to the cytoplasmic granule. It carries out the reaction Hydrolysis of proteins, including fibronectin, type IV collagen and nucleolin. Preferential cleavage: -Arg-|-Xaa-, -Lys-|-Xaa- &gt;&gt; -Phe-|-Xaa- in small molecule substrates.. Abundant protease in the cytosolic granules of cytotoxic T-cells and NK-cells which activates caspase-independent pyroptosis when delivered into the target cell through the immunological synapse. It cleaves after Lys or Arg. Cleaves APEX1 after 'Lys-31' and destroys its oxidative repair activity. Cleaves the nucleosome assembly protein SET after 'Lys-189', which disrupts its nucleosome assembly activity and allows the SET complex to translocate into the nucleus to nick and degrade the DNA. The polypeptide is Granzyme A (GZMA) (Bos taurus (Bovine)).